The sequence spans 167 residues: Putative ripening-related protein 6 (167 aa).

The signal sequence occupies residues 1–23 (MANAKQLALFAMLVLLLASCAAA). Residues 28–57 (KPDPCDGGGGGVDSHLPPGMRRCSSPAVSE) are disordered.

The protein belongs to the kiwellin family.

It localises to the secreted. This is Putative ripening-related protein 6 from Oryza sativa subsp. japonica (Rice).